The primary structure comprises 352 residues: DNA polymerase IV (352 aa).

In terms of domain architecture, UmuC spans 4–185; the sequence is IIHVDMDCFF…LPLSKIPGVG (182 aa). 2 residues coordinate Mg(2+): D8 and D103. E104 is a catalytic residue.

Belongs to the DNA polymerase type-Y family. As to quaternary structure, monomer. Mg(2+) is required as a cofactor.

The protein resides in the cytoplasm. It carries out the reaction DNA(n) + a 2'-deoxyribonucleoside 5'-triphosphate = DNA(n+1) + diphosphate. Its function is as follows. Poorly processive, error-prone DNA polymerase involved in untargeted mutagenesis. Copies undamaged DNA at stalled replication forks, which arise in vivo from mismatched or misaligned primer ends. These misaligned primers can be extended by PolIV. Exhibits no 3'-5' exonuclease (proofreading) activity. May be involved in translesional synthesis, in conjunction with the beta clamp from PolIII. The polypeptide is DNA polymerase IV (Yersinia enterocolitica serotype O:8 / biotype 1B (strain NCTC 13174 / 8081)).